A 155-amino-acid chain; its full sequence is Endoribonuclease YbeY (155 aa).

Zn(2+) is bound by residues His-114, His-118, and His-124.

It belongs to the endoribonuclease YbeY family. The cofactor is Zn(2+).

It localises to the cytoplasm. In terms of biological role, single strand-specific metallo-endoribonuclease involved in late-stage 70S ribosome quality control and in maturation of the 3' terminus of the 16S rRNA. This chain is Endoribonuclease YbeY, found in Citrobacter koseri (strain ATCC BAA-895 / CDC 4225-83 / SGSC4696).